The sequence spans 947 residues: Isoleucine--tRNA ligase (947 aa).

Positions Pro57–His67 match the 'HIGH' region motif. Glu568 contributes to the L-isoleucyl-5'-AMP binding site. The 'KMSKS' region signature appears at Lys609 to Ser613. Position 612 (Lys612) interacts with ATP. Zn(2+) contacts are provided by Cys908, Cys911, Cys926, and Cys929.

Belongs to the class-I aminoacyl-tRNA synthetase family. IleS type 1 subfamily. Monomer. Zn(2+) is required as a cofactor.

The protein localises to the cytoplasm. The enzyme catalyses tRNA(Ile) + L-isoleucine + ATP = L-isoleucyl-tRNA(Ile) + AMP + diphosphate. In terms of biological role, catalyzes the attachment of isoleucine to tRNA(Ile). As IleRS can inadvertently accommodate and process structurally similar amino acids such as valine, to avoid such errors it has two additional distinct tRNA(Ile)-dependent editing activities. One activity is designated as 'pretransfer' editing and involves the hydrolysis of activated Val-AMP. The other activity is designated 'posttransfer' editing and involves deacylation of mischarged Val-tRNA(Ile). This Persephonella marina (strain DSM 14350 / EX-H1) protein is Isoleucine--tRNA ligase.